A 216-amino-acid polypeptide reads, in one-letter code: Thiamine-phosphate synthase (216 aa).

Residues 39 to 43 and asparagine 71 each bind 4-amino-2-methyl-5-(diphosphooxymethyl)pyrimidine; that span reads QLRRK. Mg(2+)-binding residues include aspartate 72 and aspartate 91. 4-amino-2-methyl-5-(diphosphooxymethyl)pyrimidine is bound at residue serine 109. 2-[(2R,5Z)-2-carboxy-4-methylthiazol-5(2H)-ylidene]ethyl phosphate is bound at residue 136 to 138; that stretch reads SPT. 4-amino-2-methyl-5-(diphosphooxymethyl)pyrimidine is bound at residue lysine 139. 2-[(2R,5Z)-2-carboxy-4-methylthiazol-5(2H)-ylidene]ethyl phosphate is bound by residues glycine 172 and 192–193; that span reads IT.

This sequence belongs to the thiamine-phosphate synthase family. Mg(2+) serves as cofactor.

It catalyses the reaction 2-[(2R,5Z)-2-carboxy-4-methylthiazol-5(2H)-ylidene]ethyl phosphate + 4-amino-2-methyl-5-(diphosphooxymethyl)pyrimidine + 2 H(+) = thiamine phosphate + CO2 + diphosphate. The enzyme catalyses 2-(2-carboxy-4-methylthiazol-5-yl)ethyl phosphate + 4-amino-2-methyl-5-(diphosphooxymethyl)pyrimidine + 2 H(+) = thiamine phosphate + CO2 + diphosphate. It carries out the reaction 4-methyl-5-(2-phosphooxyethyl)-thiazole + 4-amino-2-methyl-5-(diphosphooxymethyl)pyrimidine + H(+) = thiamine phosphate + diphosphate. It functions in the pathway cofactor biosynthesis; thiamine diphosphate biosynthesis; thiamine phosphate from 4-amino-2-methyl-5-diphosphomethylpyrimidine and 4-methyl-5-(2-phosphoethyl)-thiazole: step 1/1. Condenses 4-methyl-5-(beta-hydroxyethyl)thiazole monophosphate (THZ-P) and 2-methyl-4-amino-5-hydroxymethyl pyrimidine pyrophosphate (HMP-PP) to form thiamine monophosphate (TMP). The polypeptide is Thiamine-phosphate synthase (Bordetella avium (strain 197N)).